We begin with the raw amino-acid sequence, 918 residues long: Aconitase-ribosomal protein bL21m fusion protein (918 aa).

Residues 1-30 (MATFARMKLCLSGSSQAIPSKGISLVAARF) constitute a mitochondrion transit peptide. A homocitrate dehydratase, mitochondrial region spans residues 31-811 (QSTASRASYV…IDSIKQQPDH (781 aa)). Substrate is bound by residues Gln105 and 198 to 200 (DSH). 3 residues coordinate [4Fe-4S] cluster: Cys394, Cys457, and Cys460. Substrate contacts are provided by residues Arg484, Arg489, Lys619, and 680-681 (AR). A large ribosomal subunit protein bL21m region spans residues 812-918 (YADAYIFNRH…ILRVTELKLN (107 aa)).

It in the N-terminal section; belongs to the aconitase/IPM isomerase family. In the C-terminal section; belongs to the bacterial ribosomal protein bL21 family. In terms of assembly, component of the mitochondrial large ribosomal subunit (mt-LSU). Mature yeast 74S mitochondrial ribosomes consist of a small (37S) and a large (54S) subunit. The 37S small subunit contains a 15S ribosomal RNA (15S mt-rRNA) and at least 32 different proteins. The 54S large subunit contains a 21S rRNA (21S mt-rRNA) and at least 45 different proteins. Requires [4Fe-4S] cluster as cofactor.

The protein localises to the mitochondrion. It is found in the nucleus. It catalyses the reaction (2R)-homocitrate = cis-homoaconitate + H2O. It functions in the pathway amino-acid biosynthesis; L-lysine biosynthesis via AAA pathway; L-alpha-aminoadipate from 2-oxoglutarate: step 2/5. Functionally, catalyzes the reversible dehydration of (R)-homocitrate to cis-homoaconitate, a step in the alpha-aminoadipate pathway for lysine biosynthesis. Its function is as follows. Component of the mitochondrial ribosome (mitoribosome), a dedicated translation machinery responsible for the synthesis of mitochondrial genome-encoded proteins, including at least some of the essential transmembrane subunits of the mitochondrial respiratory chain. The mitoribosomes are attached to the mitochondrial inner membrane and translation products are cotranslationally integrated into the membrane. In Schizosaccharomyces pombe (strain 972 / ATCC 24843) (Fission yeast), this protein is Aconitase-ribosomal protein bL21m fusion protein (aco2).